The sequence spans 630 residues: Neuronal acetylcholine receptor subunit alpha-4 (630 aa).

Residues M1–S30 form the signal peptide. At I32–T249 the chain is on the extracellular side. A glycan (N-linked (GlcNAc...) asparagine) is linked at N59. Ca(2+) contacts are provided by V78 and E80. N-linked (GlcNAc...) asparagine glycans are attached at residues N109 and N176. Intrachain disulfides connect C163–C177 and C227–C228. The helical transmembrane segment at I250–P270 threads the bilayer. Residue C273 is the site of S-palmitoyl cysteine attachment. 2 consecutive transmembrane segments (helical) span residues L279–P299 and L313–V333. Over H334 to R604 the chain is Cytoplasmic. 2 disordered regions span residues T418–P463 and S505–P526. Phosphoserine is present on S428. Residues P434 to K443 are compositionally biased toward basic and acidic residues. The span at C447 to K457 shows a compositional bias: pro residues. Phosphoserine is present on residues S542 and S545. The helical transmembrane segment at I605–P625 threads the bilayer.

Belongs to the ligand-gated ion channel (TC 1.A.9) family. Acetylcholine receptor (TC 1.A.9.1) subfamily. Alpha-4/CHRNA4 sub-subfamily. Neuronal AChR is composed of two different types of subunits: alpha and beta. CHRNA4 forms heteropentameric neuronal acetylcholine receptors with CHRNB2 and CHRNB4, as well as CHRNA5 and CHRNB3 as accesory subunits. Found in two major stoichiometric forms, LS (low agonist sensitivity): (CHRNA4)3:(CHRNB2)2 and HS (high agonist sensitivity): (CHRNA4)2:(CHRNB2)3, the two stoichiometric forms differ in their unitary conductance, calcium permeability, ACh sensitivity and potentiation by divalent cation. Cells produce predominantly an (CHRNA4)3:(CHRNB2)2 nAChR. The (CHRNA4)2:(CHRNB2)3 expression is selectively up-regulated by nicotine and has lower single channel conductance and calcium permeability. In the striatum, also forms CHRNA4:CHRNA6:CHRNB2 complexes. Also found in the stoichiometric form: (CHRNA4:CHRNB2)2:CHRNB3. Interacts with RIC3; which is required for proper folding and assembly. Interacts with LYPD6. In terms of tissue distribution, in various regions of the central nervous system. Expressed in hippocampal neurons.

The protein localises to the presynaptic cell membrane. Its subcellular location is the cell membrane. The catalysed reaction is Ca(2+)(in) = Ca(2+)(out). The enzyme catalyses K(+)(in) = K(+)(out). It carries out the reaction Na(+)(in) = Na(+)(out). Activated by a myriad of ligands such as acetylcholine, cytisine, nicotine, choline and epibatidine. Channel potentiation by calcium is stoichiometry-selective, CHRNA4:CHRNB2 nACh receptor is achieved by calcium association with topographically distinct sites framed by anionic residues within the CHRNA4 subunit and between the CHRNA4 and CHRNB2 subunits. nAChR activity is inhibited by the antagonist alpha-conotoxins BuIA, PnIA, GID and MII, small disulfide-constrained peptides from cone snails. In terms of biological role, component of neuronal acetylcholine receptors (nAChRs) that function as pentameric, ligand-gated cation channels with high calcium permeability among other activities. nAChRs are excitatory neurotrasnmitter receptors formed by a collection of nAChR subunits known to mediate synaptic transmission in the nervous system and the neuromuscular junction. Each nAchR subunit confers differential attributes to channel properties, including activation, deactivation and desensitization kinetics, pH sensitivity, cation permeability, and binding to allosteric modulators. CHRNA4 forms heteropentameric neuronal acetylcholine receptors with CHRNB2 and CHRNB4, as well as CHRNA5 and CHRNB3 as accesory subunits. Is the most abundant nAChR subtype expressed in the central nervous system. Found in two major stoichiometric forms,(CHRNA4)3:(CHRNB2)2 and (CHRNA4)2:(CHRNB2)3, the two stoichiometric forms differ in their unitary conductance, calcium permeability, ACh sensitivity and potentiation by divalent cation. Involved in the modulation of calcium-dependent signaling pathways, influences the release of neurotransmitters, including dopamine, glutamate and GABA. The polypeptide is Neuronal acetylcholine receptor subunit alpha-4 (Chrna4) (Rattus norvegicus (Rat)).